The primary structure comprises 254 residues: Cdc42 effector protein 3 (254 aa).

The region spanning 31–45 (ISPPLGDFRHTIHIG) is the CRIB domain. Position 63 is a phosphotyrosine (Tyr-63). 3 positions are modified to phosphoserine: Ser-89, Ser-108, and Ser-144. The tract at residues 165–205 (VHQGDTSWGSSGSGSQSSQGRDSHSSSLSEQSSDWPADDMF) is disordered. Residues 171-197 (SWGSSGSGSQSSQGRDSHSSSLSEQSS) show a composition bias toward low complexity.

It belongs to the BORG/CEP family. As to quaternary structure, interacts with RHOQ and CDC42, in a GTP-dependent manner, and with SEPT7.

It localises to the endomembrane system. The protein localises to the cytoplasm. The protein resides in the cytoskeleton. Probably involved in the organization of the actin cytoskeleton. May act downstream of CDC42 to induce actin filament assembly leading to cell shape changes. Induces pseudopodia formation in fibroblasts. This chain is Cdc42 effector protein 3 (Cdc42ep3), found in Mus musculus (Mouse).